Reading from the N-terminus, the 1379-residue chain is DNA-directed RNA polymerase subunit beta'' (1379 aa).

C220, C293, C300, and C303 together coordinate Zn(2+).

The protein belongs to the RNA polymerase beta' chain family. RpoC2 subfamily. In terms of assembly, in plastids the minimal PEP RNA polymerase catalytic core is composed of four subunits: alpha, beta, beta', and beta''. When a (nuclear-encoded) sigma factor is associated with the core the holoenzyme is formed, which can initiate transcription. It depends on Zn(2+) as a cofactor.

The protein localises to the plastid. It localises to the chloroplast. It carries out the reaction RNA(n) + a ribonucleoside 5'-triphosphate = RNA(n+1) + diphosphate. In terms of biological role, DNA-dependent RNA polymerase catalyzes the transcription of DNA into RNA using the four ribonucleoside triphosphates as substrates. The chain is DNA-directed RNA polymerase subunit beta'' from Capsella bursa-pastoris (Shepherd's purse).